A 121-amino-acid chain; its full sequence is Holo-[acyl-carrier-protein] synthase (121 aa).

2 residues coordinate Mg(2+): Asp-8 and Glu-58.

It belongs to the P-Pant transferase superfamily. AcpS family. Requires Mg(2+) as cofactor.

The protein resides in the cytoplasm. The catalysed reaction is apo-[ACP] + CoA = holo-[ACP] + adenosine 3',5'-bisphosphate + H(+). Functionally, transfers the 4'-phosphopantetheine moiety from coenzyme A to a Ser of acyl-carrier-protein. The sequence is that of Holo-[acyl-carrier-protein] synthase from Bacillus pumilus (strain SAFR-032).